The sequence spans 504 residues: MSILLCFLCLLPVFLVSLSILSKRLKPSKWKLPPGPKTLPIIGNLHNLTGLPHTCFRNLSQKFGPVMLLHFGFVPVVVISSKEGAEEALKTQDLECCSRPETVATRMISYNFKDIGFAPYGEEWKALRKLVVMELLNTKKFQSFRYIREEENDLLIKKLTESALKKSPVNLKKTLFTLVASIVCRLAFGVNIHKCEFVDEDNVADLVNKFEMLVAGVAFTDFFPGVGWLVDRISGQNKTLNNVFSELDTFFQNVLDDHIKPGRQVSENPDVVDVMLDLMKKQEKDGESFKLTTDHLKGIISDIFLAGVNTSAVTLNWAMAELIRNPRVMKKVQDEIRTTLGDKKQRITEQDLSQVHYFKLVVKEIFRLHPAAPLLLPRETMSHVKIQGYDIPVKTQMMINIYSIARDPKLWTNPDEFNPDRFLDSSIDYRGLNFELLPFGSGRRICPGMTLGITTVELGLLNLLYFFDWVVPVGKNVKDINLEETGSIIISKKTTLELVPLVHH.

The chain crosses the membrane as a helical span at residues 1 to 21 (MSILLCFLCLLPVFLVSLSIL). Residue K82 forms a Glycyl lysine isopeptide (Lys-Gly) (interchain with G-Cter in ubiquitin) linkage. Heme is bound at residue C446.

Belongs to the cytochrome P450 family. The cofactor is heme. As to expression, highly expressed in rosette leaves. Also expressed in roots, leaves, flowers, and siliques.

It is found in the membrane. The polypeptide is Cytochrome P450 71B7 (CYP71B7) (Arabidopsis thaliana (Mouse-ear cress)).